Consider the following 535-residue polypeptide: CTP synthase (535 aa).

Positions 1–267 (MTKYIFVTGG…DKLVCEHMKL (267 aa)) are amidoligase domain. A CTP-binding site is contributed by serine 13. UTP is bound at residue serine 13. 14 to 19 (SLGKGI) lines the ATP pocket. Position 54 (tyrosine 54) interacts with L-glutamine. Residue aspartate 71 coordinates ATP. The Mg(2+) site is built by aspartate 71 and glutamate 141. CTP is bound by residues 148–150 (DIE), 188–193 (KTKPTQ), and lysine 224. UTP-binding positions include 188 to 193 (KTKPTQ) and lysine 224. The Glutamine amidotransferase type-1 domain occupies 292 to 534 (TIGLVGKYVE…IGASVEAANQ (243 aa)). Glycine 354 contacts L-glutamine. Cysteine 381 acts as the Nucleophile; for glutamine hydrolysis in catalysis. Residues 382–385 (LGMQ), glutamate 405, and arginine 462 each bind L-glutamine. Active-site residues include histidine 507 and glutamate 509.

It belongs to the CTP synthase family. As to quaternary structure, homotetramer. Interacts with BrxC.

The enzyme catalyses UTP + L-glutamine + ATP + H2O = CTP + L-glutamate + ADP + phosphate + 2 H(+). It catalyses the reaction L-glutamine + H2O = L-glutamate + NH4(+). The catalysed reaction is UTP + NH4(+) + ATP = CTP + ADP + phosphate + 2 H(+). Its pathway is pyrimidine metabolism; CTP biosynthesis via de novo pathway; CTP from UDP: step 2/2. Allosterically activated by GTP, when glutamine is the substrate; GTP has no effect on the reaction when ammonia is the substrate. The allosteric effector GTP functions by stabilizing the protein conformation that binds the tetrahedral intermediate(s) formed during glutamine hydrolysis. Inhibited by the product CTP, via allosteric rather than competitive inhibition. In terms of biological role, catalyzes the ATP-dependent amination of UTP to CTP with either L-glutamine or ammonia as the source of nitrogen. Regulates intracellular CTP levels through interactions with the four ribonucleotide triphosphates. This is CTP synthase from Bacillus subtilis (strain 168).